The following is a 213-amino-acid chain: Adenylate kinase (213 aa).

10–15 (GAGKGT) is a binding site for ATP. The segment at 30–59 (STGDMFRAAIKEGTEMGKKAKEYMDKGALV) is NMP. AMP-binding positions include threonine 31, arginine 36, 57–59 (ALV), 85–88 (GFPR), and glutamine 92. Residues 126-163 (GRRVCKNCGASYHVIFNPPQAEGKCNSCNGELYQRSDD) form an LID region. Arginine 127 serves as a coordination point for ATP. Residues cysteine 130 and cysteine 133 each contribute to the Zn(2+) site. ATP is bound at residue 136 to 137 (SY). Zn(2+) is bound by residues cysteine 150 and cysteine 153. 2 residues coordinate AMP: arginine 160 and arginine 171. Glutamine 199 serves as a coordination point for ATP.

Belongs to the adenylate kinase family. As to quaternary structure, monomer.

It is found in the cytoplasm. It carries out the reaction AMP + ATP = 2 ADP. It functions in the pathway purine metabolism; AMP biosynthesis via salvage pathway; AMP from ADP: step 1/1. In terms of biological role, catalyzes the reversible transfer of the terminal phosphate group between ATP and AMP. Plays an important role in cellular energy homeostasis and in adenine nucleotide metabolism. This is Adenylate kinase from Desulforamulus reducens (strain ATCC BAA-1160 / DSM 100696 / MI-1) (Desulfotomaculum reducens).